We begin with the raw amino-acid sequence, 129 residues long: GEL complex subunit OPTI (129 aa).

Topologically, residues 1–44 (MSGGRRKEEPPQPQLANGALKVSVWSKVLRSDAAWDDKDEFLDV) are cytoplasmic. The helical transmembrane segment at 45 to 65 (IYWFRQIIALVLGVIWGVLPL) threads the bilayer. A topological domain (lumenal) is located at residue Arg-66. A helical transmembrane segment spans residues 67-84 (GFLGIAGFCLINAGVLYL). At 85–103 (YFSNYLQIDEEEYGGTWEL) the chain is on the cytoplasmic side. A helical transmembrane segment spans residues 104–127 (TKEGFMTSFALFMVIWIIFYTAIH). The Lumenal portion of the chain corresponds to 128–129 (YD).

The protein belongs to the EMC6 family. Component of the GET- and EMC-like (GEL) complex, composed of RAB5IF/OPTI and TMCO1. The GEL complex is part of the multi-pass translocon (MPT) complex, composed of three subcomplexes, the GEL complex (composed of RAB5IF/OPTI and TMCO1), the BOS complex (composed of NCLN/Nicalin, NOMO1 and TMEM147) and the PAT complex (composed of WDR83OS/Asterix and CCDC47). The MPT complex associates with the SEC61 complex. Interacts with NDUFS3, NDUFA4, NDUFV1, NDUFA9 and NDUFS8 of the mitochondrial membrane respiratory chain NADH dehydrogenase (Complex I). Interacts with UQCRC2 of the ubiquinol-cytochrome c reductase complex (Complex III). Interacts with COX5A and COX7C of the cytochrome c oxidase complex (Complex IV). As to expression, expressed in neuronal cells.

It is found in the endoplasmic reticulum membrane. The protein resides in the mitochondrion inner membrane. Component of the multi-pass translocon (MPT) complex that mediates insertion of multi-pass membrane proteins into the lipid bilayer of membranes. The MPT complex takes over after the SEC61 complex: following membrane insertion of the first few transmembrane segments of proteins by the SEC61 complex, the MPT complex occludes the lateral gate of the SEC61 complex to promote insertion of subsequent transmembrane regions. Within the MPT complex, the GEL subcomplex may mediate insertion of transmembrane regions into the membrane. In addition to its role in multi-pass membrane insertion, RAB5IF/OPTI also acts as an assembly factor for mitochondrial respiratory complexes. This chain is GEL complex subunit OPTI, found in Mus musculus (Mouse).